The sequence spans 359 residues: Phospho-N-acetylmuramoyl-pentapeptide-transferase (359 aa).

A run of 10 helical transmembrane segments spans residues 24-44, 72-92, 100-120, 134-154, 170-190, 197-217, 234-254, 261-281, 289-309, and 336-356; these read FRAL…SPIF, FVPS…SILL, TWIM…DDFV, MLGQ…VMHI, LGYF…NAVN, GLAI…SYVA, AGEL…FLWF, MFMG…LAIM, IIAG…VSVF, and KIVV…IATL.

Belongs to the glycosyltransferase 4 family. MraY subfamily. Requires Mg(2+) as cofactor.

Its subcellular location is the cell inner membrane. The enzyme catalyses UDP-N-acetyl-alpha-D-muramoyl-L-alanyl-gamma-D-glutamyl-meso-2,6-diaminopimeloyl-D-alanyl-D-alanine + di-trans,octa-cis-undecaprenyl phosphate = di-trans,octa-cis-undecaprenyl diphospho-N-acetyl-alpha-D-muramoyl-L-alanyl-D-glutamyl-meso-2,6-diaminopimeloyl-D-alanyl-D-alanine + UMP. The protein operates within cell wall biogenesis; peptidoglycan biosynthesis. Catalyzes the initial step of the lipid cycle reactions in the biosynthesis of the cell wall peptidoglycan: transfers peptidoglycan precursor phospho-MurNAc-pentapeptide from UDP-MurNAc-pentapeptide onto the lipid carrier undecaprenyl phosphate, yielding undecaprenyl-pyrophosphoryl-MurNAc-pentapeptide, known as lipid I. The polypeptide is Phospho-N-acetylmuramoyl-pentapeptide-transferase (Hydrogenobaculum sp. (strain Y04AAS1)).